We begin with the raw amino-acid sequence, 178 residues long: Putative peroxiredoxin in rubredoxin operon (178 aa).

Positions 3–163 constitute a Thioredoxin domain; that stretch reads RLVGKPAPEF…TLRVLKAFQT (161 aa). Cysteine 50 acts as the Cysteine sulfenic acid (-SOH) intermediate in catalysis.

It belongs to the peroxiredoxin family. AhpC/Prx1 subfamily. In terms of assembly, homodimer; disulfide-linked, upon oxidation.

The protein localises to the cytoplasm. It carries out the reaction a hydroperoxide + [protein]-dithiol = [protein]-disulfide + an alcohol + H2O. Thiol-specific peroxidase that catalyzes the reduction of hydrogen peroxide and organic hydroperoxides to water and alcohols, respectively. Plays a role in cell protection against oxidative stress by detoxifying peroxides. The sequence is that of Putative peroxiredoxin in rubredoxin operon from Clostridium pasteurianum.